The following is a 249-amino-acid chain: Transmembrane protein 51 (249 aa).

Transmembrane regions (helical) follow at residues 17–37 (IGLG…VPGF) and 64–84 (VAYV…CLSI). Disordered regions lie at residues 95 to 126 (ELAR…SRYY), 161 to 199 (TGLD…PLKV), and 213 to 249 (RITL…RPPD). The segment covering 99–108 (IQQQAGTVPH) has biased composition (polar residues). Serine 109, serine 114, serine 178, and serine 188 each carry phosphoserine. Positions 167-178 (TPTSTRAETETS) are enriched in polar residues. A compositionally biased stretch (basic residues) spans 190–199 (LAKRLKPLKV). The segment covering 220–234 (NVPPPSIEPLTPPPL) has biased composition (pro residues).

It localises to the membrane. The chain is Transmembrane protein 51 (Tmem51) from Mus musculus (Mouse).